Consider the following 299-residue polypeptide: Zinc finger protein 414 (299 aa).

2 stretches are compositionally biased toward polar residues: residues 1 to 20 (MEEL…SSSN) and 70 to 80 (SCQTSSTTRGV). The interval 1–102 (MEELSGPSSD…PPPGKQIPCS (102 aa)) is disordered. 2 consecutive C2H2-type zinc fingers follow at residues 99–123 (IPCS…LRTH) and 135–159 (FRCS…GKLH). The C2H2-type 3; degenerate zinc-finger motif lies at 166–190 (FKCENCLLRFRTHRSLFKHLHVCID). Disordered regions lie at residues 193-228 (QNPA…PFPL) and 254-299 (PRLR…GACR). Over residues 203–215 (LDKEPPVPERPPE) the composition is skewed to basic and acidic residues. Over residues 217–228 (DPSSSLGLPFPL) the composition is skewed to low complexity. Polar residues predominate over residues 268-285 (TSSTAIWKKSQGATSSPR).

The protein belongs to the krueppel C2H2-type zinc-finger protein family.

The protein localises to the nucleus. May be involved in transcriptional regulation. In Rattus norvegicus (Rat), this protein is Zinc finger protein 414 (Znf414).